Consider the following 339-residue polypeptide: Ferredoxin--NADP reductase (339 aa).

Positions 36, 44, 49, 89, 123, 290, and 331 each coordinate FAD.

This sequence belongs to the ferredoxin--NADP reductase type 2 family. As to quaternary structure, homodimer. Requires FAD as cofactor.

The catalysed reaction is 2 reduced [2Fe-2S]-[ferredoxin] + NADP(+) + H(+) = 2 oxidized [2Fe-2S]-[ferredoxin] + NADPH. This Acidiphilium cryptum (strain JF-5) protein is Ferredoxin--NADP reductase.